Consider the following 360-residue polypeptide: Aspartate beta-hydroxylase domain-containing protein 1 (360 aa).

Topologically, residues 1-45 (MWKGGNQEAVIEGSGGELGVPGSWGLQDAACHLARASLPIMFPWP) are cytoplasmic. Residues 46–68 (LPLGSSALTMLLGALTSLFLWYC) form a helical membrane-spanning segment. Topologically, residues 69–360 (YRLGSQDMQA…ALDFVFAPDP (292 aa)) are lumenal.

It belongs to the aspartyl/asparaginyl beta-hydroxylase family.

Its subcellular location is the membrane. This is Aspartate beta-hydroxylase domain-containing protein 1 (Asphd1) from Mus musculus (Mouse).